A 230-amino-acid chain; its full sequence is Orotidine 5'-phosphate decarboxylase (230 aa).

Substrate contacts are provided by residues D16, K38, 65–74 (DLKLHDIGNT), T119, R180, Q189, G209, and R210. K67 serves as the catalytic Proton donor.

This sequence belongs to the OMP decarboxylase family. Type 1 subfamily. Homodimer.

The enzyme catalyses orotidine 5'-phosphate + H(+) = UMP + CO2. It participates in pyrimidine metabolism; UMP biosynthesis via de novo pathway; UMP from orotate: step 2/2. Catalyzes the decarboxylation of orotidine 5'-monophosphate (OMP) to uridine 5'-monophosphate (UMP). This chain is Orotidine 5'-phosphate decarboxylase, found in Methylobacterium radiotolerans (strain ATCC 27329 / DSM 1819 / JCM 2831 / NBRC 15690 / NCIMB 10815 / 0-1).